A 464-amino-acid chain; its full sequence is UDP-N-acetylmuramate--L-alanine ligase (464 aa).

117–123 (GTHGKTT) is a binding site for ATP.

Belongs to the MurCDEF family.

It localises to the cytoplasm. The enzyme catalyses UDP-N-acetyl-alpha-D-muramate + L-alanine + ATP = UDP-N-acetyl-alpha-D-muramoyl-L-alanine + ADP + phosphate + H(+). It participates in cell wall biogenesis; peptidoglycan biosynthesis. Its function is as follows. Cell wall formation. The polypeptide is UDP-N-acetylmuramate--L-alanine ligase (Streptomyces avermitilis (strain ATCC 31267 / DSM 46492 / JCM 5070 / NBRC 14893 / NCIMB 12804 / NRRL 8165 / MA-4680)).